The sequence spans 766 residues: Discoidin domain-containing receptor A (766 aa).

The N-terminal stretch at 1 to 18 is a signal peptide; sequence MQIALVLLAIYGTTTTNT. The Extracellular portion of the chain corresponds to 19 to 372; it reads LRIDQCGENA…PPSSAATQQL (354 aa). 2 consecutive F5/8 type C domains span residues 24-180 and 195-351; these read CGEN…IHGC and SRLD…FTSA. An intrachain disulfide couples Cys24 to Cys180. N-linked (GlcNAc...) asparagine glycosylation is found at Asn87, Asn103, Asn129, Asn242, Asn268, Asn311, and Asn353. A helical transmembrane segment spans residues 373–393; the sequence is LVVCGIIFLTIFACVAYCVSV. The Cytoplasmic segment spans residues 394–766; it reads CLKRRQKNKS…FERLVKPFQD (373 aa). The segment at 475-501 is disordered; it reads NFPPPPEGREEHTYSQPVSPENSSNGS. Polar residues predominate over residues 488 to 501; it reads YSQPVSPENSSNGS. The Protein kinase domain maps to 519-766; the sequence is LLIGKAIGEG…FERLVKPFQD (248 aa). ATP contacts are provided by residues 525 to 533 and Lys547; that span reads IGEGKFTMI.

This sequence belongs to the protein kinase superfamily. Tyr protein kinase family. Insulin receptor subfamily. In terms of tissue distribution, expressed in neurons in head and tail, some motoneurons in ventral nerve cord, in PVP interneurons, pharynx and stomato-intestinal muscle.

It localises to the cell membrane. Its subcellular location is the cell projection. The protein resides in the axon. The protein localises to the perikaryon. Receptor which, together with svh-4, is involved in axon guidance to establish the tracts for the ventral and dorsal nerve cords during nervous system development. May play a role in axon regeneration following injury in D-type motor neurons. In Caenorhabditis elegans, this protein is Discoidin domain-containing receptor A.